Here is a 1325-residue protein sequence, read N- to C-terminus: ATP-binding cassette sub-family C member 4 (1325 aa).

The next 6 membrane-spanning stretches (helical) occupy residues 93–113 (LILG…PLFL), 136–156 (GYAA…HLYF), 205–225 (FDQV…AIAV), 227–247 (VLLW…LVIL), 322–342 (ASFF…YVLL), and 351–371 (VFVA…FFPS). Residues 93–377 (LILGIFTLIE…FFPSAIERGS (285 aa)) enclose the ABC transmembrane type-1 1 domain. Positions 410–633 (VHVQDFTAFW…GVDFGSLLKK (224 aa)) constitute an ABC transporter 1 domain. 445–452 (GPVGAGKS) provides a ligand contact to ATP. Thr-646 and Thr-648 each carry phosphothreonine. Over residues 657 to 667 (ASIWSQQSSRP) the composition is skewed to polar residues. Residues 657 to 690 (ASIWSQQSSRPSLKDGAPEGQDAENTQAVQPEES) are disordered. Residues Ser-664 and Ser-668 each carry the phosphoserine modification. The next 5 helical transmembrane spans lie at 710–730 (SWFF…FYVL), 761–781 (LSWY…FGIA), 849–869 (LVVS…IPLV), 954–974 (AICA…AKTL), and 977–997 (GQVG…QWSV). Residues 714-1005 (IIFLVLLNMV…SVRQSAEVEN (292 aa)) form the ABC transmembrane type-1 2 domain. In terms of domain architecture, ABC transporter 2 spans 1041–1274 (IVFDNVNFTY…PESLFYKMVQ (234 aa)). 1075-1082 (GRTGAGKS) provides a ligand contact to ATP. A PDZ-binding motif is present at residues 1322-1325 (ETAL).

As to quaternary structure, interacts (via PDZ-binding motif) with SNX27 (via PDZ domain); this interaction accelerates MRP4 internalization. The cofactor is Mg(2+). Post-translationally, N-glycosylated; leading to substrate-selective effects on its transport activity.

It localises to the basolateral cell membrane. It is found in the apical cell membrane. The enzyme catalyses ATP + H2O + xenobioticSide 1 = ADP + phosphate + xenobioticSide 2.. It carries out the reaction an S-substituted glutathione(in) + ATP + H2O = an S-substituted glutathione(out) + ADP + phosphate + H(+). It catalyses the reaction 17beta-estradiol 17-O-(beta-D-glucuronate)(in) + ATP + H2O = 17beta-estradiol 17-O-(beta-D-glucuronate)(out) + ADP + phosphate + H(+). The catalysed reaction is dehydroepiandrosterone 3-sulfate(in) + ATP + H2O = dehydroepiandrosterone 3-sulfate(out) + ADP + phosphate + H(+). The enzyme catalyses leukotriene C4(in) + ATP + H2O = leukotriene C4(out) + ADP + phosphate + H(+). It carries out the reaction leukotriene B4(in) + ATP + H2O = leukotriene B4(out) + ADP + phosphate + H(+). It catalyses the reaction urate(in) + ATP + H2O = urate(out) + ADP + phosphate + H(+). The catalysed reaction is 3',5'-cyclic GMP(in) + ATP + H2O = 3',5'-cyclic GMP(out) + ADP + phosphate + H(+). The enzyme catalyses 3',5'-cyclic AMP(in) + ATP + H2O = 3',5'-cyclic AMP(out) + ADP + phosphate + H(+). It carries out the reaction prostaglandin E2(in) + ATP + H2O = prostaglandin E2(out) + ADP + phosphate + H(+). It catalyses the reaction prostaglandin E1(in) + ATP + H2O = prostaglandin E1(out) + ADP + phosphate + H(+). The catalysed reaction is glycodeoxycholate(in) + glutathione(in) + ATP + H2O = glycodeoxycholate(out) + glutathione(out) + ADP + phosphate + H(+). The enzyme catalyses cholate(in) + glutathione(in) + ATP + H2O = cholate(out) + glutathione(out) + ADP + phosphate + H(+). It carries out the reaction glycocholate(in) + glutathione(in) + ATP + H2O = glycocholate(out) + glutathione(out) + ADP + phosphate + H(+). It catalyses the reaction taurocholate(in) + glutathione(in) + ATP + H2O = taurocholate(out) + glutathione(out) + ADP + phosphate + H(+). The catalysed reaction is glycochenodeoxycholate(in) + glutathione(in) + ATP + H2O = glycochenodeoxycholate(out) + glutathione(out) + ADP + phosphate + H(+). The enzyme catalyses taurochenodeoxycholate(in) + glutathione(in) + ATP + H2O = taurochenodeoxycholate(out) + glutathione(out) + ADP + phosphate + H(+). It carries out the reaction glycoursodeoxycholate(in) + glutathione(in) + ATP + H2O = glycoursodeoxycholate(out) + glutathione(out) + ADP + phosphate + H(+). It catalyses the reaction tauroursodeoxycholate(in) + glutathione(in) + ATP + H2O = tauroursodeoxycholate(out) + glutathione(out) + ADP + phosphate + H(+). Functionally, ATP-dependent transporter of the ATP-binding cassette (ABC) family that actively extrudes physiological compounds and xenobiotics from cells. Transports a range of endogenous molecules that have a key role in cellular communication and signaling, including cyclic nucleotides such as cyclic AMP (cAMP) and cyclic GMP (cGMP), bile acids, steroid conjugates, urate, and prostaglandins. Also mediates the ATP-dependent efflux of glutathione conjugates such as leukotriene C4 (LTC4) and leukotriene B4 (LTB4). The presence of GSH is necessary for the ATP-dependent transport of LTB4, whereas GSH is not required for the transport of LTC4. Mediates the cotransport of bile acids with reduced glutathione (GSH). Transports a wide range of drugs and their metabolites, including anticancer, antiviral and antibiotics molecules. Confers resistance to anticancer agents. The polypeptide is ATP-binding cassette sub-family C member 4 (Mus musculus (Mouse)).